Consider the following 138-residue polypeptide: Putative nickel-responsive regulator (138 aa).

Ni(2+) contacts are provided by histidine 80, histidine 91, histidine 93, and cysteine 99.

This sequence belongs to the transcriptional regulatory CopG/NikR family. Requires Ni(2+) as cofactor.

Functionally, transcriptional regulator. The sequence is that of Putative nickel-responsive regulator from Campylobacter hominis (strain ATCC BAA-381 / DSM 21671 / CCUG 45161 / LMG 19568 / NCTC 13146 / CH001A).